We begin with the raw amino-acid sequence, 202 residues long: N-(5'-phosphoribosyl)anthranilate isomerase (202 aa).

This sequence belongs to the TrpF family.

The enzyme catalyses N-(5-phospho-beta-D-ribosyl)anthranilate = 1-(2-carboxyphenylamino)-1-deoxy-D-ribulose 5-phosphate. It participates in amino-acid biosynthesis; L-tryptophan biosynthesis; L-tryptophan from chorismate: step 3/5. This chain is N-(5'-phosphoribosyl)anthranilate isomerase, found in Listeria monocytogenes serovar 1/2a (strain ATCC BAA-679 / EGD-e).